A 729-amino-acid chain; its full sequence is Neurochondrin (729 aa).

Serine 2 carries the N-acetylserine modification. Phosphoserine is present on serine 2. Residues cysteine 3 and cysteine 4 are each lipidated (S-palmitoyl cysteine). Arginine 75 is subject to Asymmetric dimethylarginine. A Phosphoserine modification is found at serine 448.

This sequence belongs to the neurochondrin family. As to quaternary structure, interacts with MCHR1. Interacts with SEMA4C. Interacts with DIAPH1 (via FH3 domain). Interacts with GRM5. Palmitoylated. Palmitoylation by ZDHHC1, ZDHHC3 and ZDHHC11 regulates the association of NCDN with endosome membranes. May also be palmitoylated by ZDHHC7. As to expression, expressed in brain and in peripheral nervous system (at protein level). Weakly expressed in neurites.

It localises to the cytoplasm. The protein localises to the cytosol. Its subcellular location is the endosome membrane. It is found in the cell projection. The protein resides in the dendrite. It localises to the postsynapse. In terms of biological role, probably involved in signal transduction, in the nervous system, via increasing cell surface localization of GRM5 and positively regulating its signaling. Required for the spatial learning process. Acts as a negative regulator of Ca(2+)-calmodulin-dependent protein kinase 2 (CaMK2) phosphorylation. May play a role in modulating melanin-concentrating hormone-mediated functions via its interaction with MCHR1 that interferes with G protein-coupled signal transduction. May be involved in bone metabolism. May also be involved in neurite outgrowth. In Rattus norvegicus (Rat), this protein is Neurochondrin (Ncdn).